We begin with the raw amino-acid sequence, 765 residues long: Transient receptor potential cation channel subfamily V member 6 (765 aa).

The Cytoplasmic segment spans residues 1–367 (MGPLQGDGGP…SLKWKRYGRP (367 aa)). ANK repeat units follow at residues 84–114 (IWES…KVHQ), 118–147 (MGET…ELVF), and 156–185 (EGQT…SVSA). Residues 133–143 (EAAMVLMEAAP) form an interaction with calmodulin region. Phosphotyrosine; by SRC is present on Tyr201. ANK repeat units follow at residues 202–231 (FGEH…DIRA), 235–277 (LGNT…LVPN), and 279–308 (QGLT…HTQW). The helical transmembrane segment at 368-388 (YFCMLGAIYLLYIICFTMCCI) threads the bilayer. Topologically, residues 389–425 (YRPLKPRTNNRTSPRDNTLLQQKLLQEAYMTPKDDIR) are extracellular. Asn398 carries N-linked (GlcNAc...) asparagine glycosylation. The chain crosses the membrane as a helical span at residues 426-448 (LVGELVTVIGAIIILLVEVPDIF). Residues 449–463 (RMGVTRFFGQTILGG) are Cytoplasmic-facing. The chain crosses the membrane as a helical span at residues 464 to 483 (PFHVLIITYAFMVLVTMVMR). Topologically, residues 484–489 (LISASG) are extracellular. A helical membrane pass occupies residues 490 to 509 (EVVPMSFALVLGWCNVMYFA). The Cytoplasmic portion of the chain corresponds to 510–529 (RGFQMLGPFTIMIQKMIFGD). A helical transmembrane segment spans residues 530–552 (LMRFCWLMAVVILGFASAFYIIF). The Extracellular portion of the chain corresponds to 553-565 (QTEDPEELGHFYD). Positions 566 to 585 (YPMALFSTFELFLTIIDGPA) form an intramembrane region, pore-forming. Positions 581–585 (IDGPA) match the Selectivity filter motif. Ca(2+) is bound at residue Asp582. The Extracellular segment spans residues 586–596 (NYNVDLPFMYS). A helical transmembrane segment spans residues 597-617 (ITYAAFAIIATLLMLNLLIAM). The Cytoplasmic portion of the chain corresponds to 618-765 (MGDTHWRVAH…EDGESWEYQI (148 aa)). The interaction with S100A10 stretch occupies residues 638 to 642 (VATTV). Residues 731 to 751 (SSANWERLRQGTLRRDLRGII) form an interaction with calmodulin region. The residue at position 742 (Thr742) is a Phosphothreonine; by PKC/PRKCA.

This sequence belongs to the transient receptor (TC 1.A.4) family. TrpV subfamily. TRPV6 sub-subfamily. In terms of assembly, homotetramer. Probably also forms heterotetramers with TRPV5. Interacts with TRPV5. Interacts with S100A10 and probably with the ANAX2-S100A10 heterotetramer. The interaction with S100A10 is required for the trafficking to the plasma membrane. Interacts with BSPRY. Interacts with TCAF1 and TCAF2 isoform 2. Interacts with calmodulin. In terms of processing, glycosylated. Phosphorylation at Tyr-201 by SRC leads to an increased calcium influx through the channel. Probably dephosphorylated at this site by PTPN1. Phosphorylation by PRKCA at the calmodulin binding site delays channel inactivation. Expressed at high levels in the gastrointestinal tract, including esophagus, stomach, duodenum, jejunum, ileum and colon, and in pancreas, placenta, prostate and salivary gland. Expressed at moderate levels in liver, kidney and testis. Expressed in trophoblasts of placenta villus trees (at protein level). Expressed in locally advanced prostate cancer, metastatic and androgen-insensitive prostatic lesions but not detected in healthy prostate tissue and benign prostatic hyperplasia.

It is found in the cell membrane. The catalysed reaction is Ca(2+)(in) = Ca(2+)(out). In terms of biological role, calcium selective cation channel that mediates Ca(2+) uptake in various tissues, including the intestine. Important for normal Ca(2+) ion homeostasis in the body, including bone and skin. The channel is activated by low internal calcium level, probably including intracellular calcium store depletion, and the current exhibits an inward rectification. Inactivation includes both a rapid Ca(2+)-dependent and a slower Ca(2+)-calmodulin-dependent mechanism; the latter may be regulated by phosphorylation. In vitro, is slowly inhibited by Mg(2+) in a voltage-independent manner. Heteromeric assembly with TRPV5 seems to modify channel properties. TRPV5-TRPV6 heteromultimeric concatemers exhibit voltage-dependent gating. The chain is Transient receptor potential cation channel subfamily V member 6 (TRPV6) from Homo sapiens (Human).